A 343-amino-acid polypeptide reads, in one-letter code: Cytoplasmic tRNA 2-thiolation protein 1 (343 aa).

This sequence belongs to the TtcA family. CTU1/NCS6/ATPBD3 subfamily.

The protein localises to the cytoplasm. The protein operates within tRNA modification; 5-methoxycarbonylmethyl-2-thiouridine-tRNA biosynthesis. Its function is as follows. Plays a central role in 2-thiolation of mcm(5)S(2)U at tRNA wobble positions of tRNA(Lys), tRNA(Glu) and tRNA(Gln). Directly binds tRNAs and probably acts by catalyzing adenylation of tRNAs, an intermediate required for 2-thiolation. It is unclear whether it acts as a sulfurtransferase that transfers sulfur from thiocarboxylated URM1 onto the uridine of tRNAs at wobble position. The protein is Cytoplasmic tRNA 2-thiolation protein 1 of Drosophila willistoni (Fruit fly).